The chain runs to 630 residues: Vacuolar protein 8 (630 aa).

A lipid anchor (N-myristoyl glycine) is attached at glycine 2. ARM repeat units follow at residues 74 to 115 (EITE…NLAV), 117 to 156 (AENK…NLAT), 158 to 197 (DENK…NMTH), 199 to 238 (DENR…NIAV), 242 to 281 (NRKK…NLAS), 283 to 322 (SKYQ…NVSI), 324 to 364 (PANE…NLAA), 408 to 447 (DDLK…NLSS), and 456 to 495 (FNAV…QLLE). Disordered regions lie at residues 519–558 (AKSP…EGEG) and 572–630 (EVGE…GRDR). A compositionally biased stretch (acidic residues) spans 543–558 (SEDEFEDGLTDQEGEG). The segment covering 598-607 (GQGQTSQVGS) has biased composition (polar residues).

The protein belongs to the beta-catenin family.

It is found in the vacuole membrane. In terms of biological role, functions in both vacuole inheritance and protein targeting from the cytoplasm to vacuole. The chain is Vacuolar protein 8 (VAC8) from Cryptococcus neoformans var. neoformans serotype D (strain B-3501A) (Filobasidiella neoformans).